Here is a 574-residue protein sequence, read N- to C-terminus: Pescadillo homolog (574 aa).

The tract at residues 289-312 is disordered; it reads PSEPNDDTEVDEFPADPENAGLEE. Positions 292-303 are enriched in acidic residues; it reads PNDDTEVDEFPA. The BRCT domain occupies 323 to 416; sequence KHKSLFVGLK…LLLPVEDYFP (94 aa). Residues 452–486 form a disordered region; the sequence is LGLDEEDDDDDDDDEEEDDDDDEEEEDKKLRQLEN. The segment covering 453-477 has biased composition (acidic residues); the sequence is GLDEEDDDDDDDDEEEDDDDDEEEE.

The protein belongs to the pescadillo family. Component of the PeBoW complex, composed of bop1, pes1 and wdr12. The complex is held together by bop1, which interacts with pes1 via its N-terminal domain and with wdr12 via a high-affinity interaction between the seven-bladed beta-propeller domains of the 2 proteins. The PeBoW complex associates with the 66S pre-ribosome.

Its subcellular location is the nucleus. The protein resides in the nucleolus. It localises to the nucleoplasm. Its function is as follows. Component of the PeBoW complex, which is required for maturation of 28S and 5.8S ribosomal RNAs and formation of the 60S ribosome. Required for neural crest migration and eye development. The protein is Pescadillo homolog (pes1) of Xenopus laevis (African clawed frog).